The following is a 230-amino-acid chain: RNA-binding riboflavin kinase RibR (230 aa).

This sequence belongs to the RibR family.

It catalyses the reaction riboflavin + ATP = FMN + ADP + H(+). May be directly involved in the regulation of the rib genes. C-terminal part of RibR specifically binds to RFN of the rib leader of the riboflavin biosynthetic operon. The RFN element is a sequence within the rib-leader mRNA reported to serve as a receptor for an FMN-dependent riboswitch. Possibly, RibR produces the comodulator FMN through its own N-terminal flavokinase activity. FMN-activated RibR may stabilize the anti-anti terminator structure of RFN mRNA, causing transcription termination of the rib genes in trans. The chain is RNA-binding riboflavin kinase RibR (ribR) from Bacillus subtilis (strain 168).